The primary structure comprises 335 residues: Taste receptor type 2 member 119 (335 aa).

The Extracellular portion of the chain corresponds to 1–7 (MMEGHML). The helical transmembrane segment at 8–28 (FFLLVVVVQFLTGVLANGLIV) threads the bilayer. The Cytoplasmic segment spans residues 29–43 (VVNAIDLIMWKKMAP). The helical transmembrane segment at 44–64 (LDLLLFCLATSRIILQLCILF) threads the bilayer. At 65-81 (AQLGLSCLVRHTLFADN) the chain is on the extracellular side. N-linked (GlcNAc...) asparagine glycosylation occurs at Asn81. A helical transmembrane segment spans residues 82-102 (VTFVYIINELSLWFATWLGVF). Residues 103-124 (YCAKIATIPHPLFLWLKMRISR) lie on the Cytoplasmic side of the membrane. A helical transmembrane segment spans residues 125–145 (LVPWLILASVVYVTVTTFIHS). Residues 146–176 (RETSELPKQIFISFFSKNTTRVRPAHATLLS) lie on the Extracellular side of the membrane. N-linked (GlcNAc...) asparagine glycosylation is present at Asn163. The chain crosses the membrane as a helical span at residues 177-197 (VFVFGLTLPFLIFTVAVLLLL). The Cytoplasmic portion of the chain corresponds to 198-224 (SSLWNHSRQMRTMVGTREPSRHALVSA). The chain crosses the membrane as a helical span at residues 225-245 (MLSILSFLILYLSHDMVAVLI). Over 246 to 256 (CTQGLHFGSRT) the chain is Extracellular. The chain crosses the membrane as a helical span at residues 257-277 (FAFCLLVIGMYPSLHSIVLIL). Residues 278-335 (GNPKLKRNAKTFIVHCKCCHCARAWVTSRNPRLSDLPVPATHHSANKTSCSEACIMPS) lie on the Cytoplasmic side of the membrane.

This sequence belongs to the G-protein coupled receptor T2R family. In terms of tissue distribution, expressed in subsets of taste receptor cells of the tongue and palate epithelium and exclusively in gustducin-positive cells. Expressed in 15% taste bud cells in circumvallate and foliate papillae but only in 2% in fungiform papillae. Expressed in the gastro and duodenal tissue. Not expressed in colon, liver, heart and kidney.

The protein resides in the membrane. Its function is as follows. Gustducin-coupled receptor implicated in the perception of bitter compounds in the oral cavity and the gastrointestinal tract. Signals through PLCB2 and the calcium-regulated cation channel TRPM5. The polypeptide is Taste receptor type 2 member 119 (Tas2r119) (Mus musculus (Mouse)).